Reading from the N-terminus, the 238-residue chain is Phosphoribosylaminoimidazole-succinocarboxamide synthase (238 aa).

This sequence belongs to the SAICAR synthetase family.

The catalysed reaction is 5-amino-1-(5-phospho-D-ribosyl)imidazole-4-carboxylate + L-aspartate + ATP = (2S)-2-[5-amino-1-(5-phospho-beta-D-ribosyl)imidazole-4-carboxamido]succinate + ADP + phosphate + 2 H(+). It functions in the pathway purine metabolism; IMP biosynthesis via de novo pathway; 5-amino-1-(5-phospho-D-ribosyl)imidazole-4-carboxamide from 5-amino-1-(5-phospho-D-ribosyl)imidazole-4-carboxylate: step 1/2. The sequence is that of Phosphoribosylaminoimidazole-succinocarboxamide synthase from Desulfitobacterium hafniense (strain DSM 10664 / DCB-2).